Here is a 263-residue protein sequence, read N- to C-terminus: Ribonuclease HII (263 aa).

The 192-residue stretch at 71-262 folds into the RNase H type-2 domain; sequence KAIAGIDEVG…VKSMCCDSTN (192 aa). The a divalent metal cation site is built by D77, E78, and D172.

It belongs to the RNase HII family. Requires Mn(2+) as cofactor. Mg(2+) serves as cofactor.

It is found in the cytoplasm. It catalyses the reaction Endonucleolytic cleavage to 5'-phosphomonoester.. Functionally, endonuclease that specifically degrades the RNA of RNA-DNA hybrids. In Streptococcus pyogenes serotype M1, this protein is Ribonuclease HII.